Reading from the N-terminus, the 312-residue chain is Olfactory receptor 2T8 (312 aa).

The Extracellular segment spans residues 1-26; that stretch reads MENGSYTSYFILLGLFNHTRAHQVLF. 2 N-linked (GlcNAc...) asparagine glycosylation sites follow: N3 and N17. Residues 27–47 form a helical membrane-spanning segment; the sequence is MMVLSIVLTSLFGNSLMILLI. Topologically, residues 48-55 are cytoplasmic; that stretch reads HWDHRLHT. Residues 56–76 form a helical membrane-spanning segment; it reads PMYFLLSQLSLMDVMLVSTTV. At 77–96 the chain is on the extracellular side; that stretch reads PKMAADYLTGSKAISRAGCG. Cysteines 95 and 177 form a disulfide. A helical transmembrane segment spans residues 97–117; that stretch reads AQIFFLPTLGGGECFLLAAMA. Over 118–143 the chain is Cytoplasmic; sequence YDRYAAVCHPLRYPTLMSWQLCLRMN. Residues 144 to 164 form a helical membrane-spanning segment; the sequence is LSCWLLGAADGLLQAVATLSF. The Extracellular segment spans residues 165-201; it reads PYCGAHEIDHFFCETPVLVRLACADTSVFENAMYICC. A helical membrane pass occupies residues 202 to 222; it reads VLMLLVPFSLILSSYGLILAA. Residues 223 to 234 are Cytoplasmic-facing; the sequence is VLHMRSTEARKK. Residues 235 to 255 form a helical membrane-spanning segment; that stretch reads AFATCSSHVAVVGLFYGAAIF. Over 256–269 the chain is Extracellular; the sequence is TYMRPKSHRSTNHD. The helical transmembrane segment at 270–290 threads the bilayer; that stretch reads KVVSAFYTMFTPLLNPLIYSV. The Cytoplasmic portion of the chain corresponds to 291 to 312; that stretch reads KNSEVKGALTRCMGRCVALSRE.

Belongs to the G-protein coupled receptor 1 family.

It localises to the cell membrane. Its function is as follows. Odorant receptor. The sequence is that of Olfactory receptor 2T8 (OR2T8) from Homo sapiens (Human).